Consider the following 616-residue polypeptide: MSTIARKKGVGAVLWDYLTTVDHKKIAHLYLISGGFFFLLGGLEALFIRIQLAKPNNDFLVGGLYNEVLTMHGTTMIFLAAMPLVFAFMNAVVPLQIGARDVAFPFLNALGFWMFFFGGLFLNCSWFLGGAPDAGWTSYASLSLDSKAHHGIDFYTLGLQISGFGTIMGAINFLVTIINMRAPGMTFMRMPMFTWATFVTSALILFAFPPLTVGLIFMMMDRLFGGNFFNPAAGGNTIIWEHLFWVFGHPEVYILVLPAFGIFSEIFATFSRKRLFGYSSMVFATVLIAFLGFMVWAHHMFTVGMGPIANAIFAVATMTIAVPTGVKIFNWLFTMWGGSIKFTTPMHYAVAFIPSFVMGGVTGVMLASAAADYQYHDSYFVVAHFHYVIVGGVVFALLAGTHYWWPKMFGRMLNETLGKITFWLFFIGFHLTFFIQHFLGLTGMPRRVFTYLPHQGWETGNLISTIGAFFIAAATVILLINIVVTTAKGEKVPGDAWGDGRTLEWAIASPPPVYNFAQTPLVRGLDAFWLEKMEGKKELTPAEPLGDIHMPNSSFLPFVIAFGLFVAAFGFTYHNDAGWGLPVAILGLLITLGSMFLRSVIDDHGFHIHKEEVLEL.

A helical membrane pass occupies residues 28–48 (HLYLISGGFFFLLGGLEALFI). His-72 provides a ligand contact to Fe(II)-heme a. Transmembrane regions (helical) follow at residues 75–95 (TMIF…VVPL), 102–122 (VAFP…GLFL), 158–178 (GLQI…VTII), 198–218 (FVTS…LIFM), 243–263 (LFWV…FGIF), and 275–295 (LFGY…GFMV). The Cu cation site is built by His-249 and Tyr-253. Residues 249–253 (HPEVY) constitute a cross-link (1'-histidyl-3'-tyrosine (His-Tyr)). His-298 and His-299 together coordinate Cu cation. 7 consecutive transmembrane segments (helical) span residues 303–323 (VGMG…IAVP), 349–369 (AVAF…LASA), 380–400 (FVVA…LLAG), 420–440 (ITFW…HFLG), 463–483 (ISTI…INIV), 553–573 (SSFL…GFTY), and 577–597 (AGWG…SMFL). Residue His-384 participates in Fe(II)-heme o binding. Position 384 (His-384) interacts with heme a3. His-386 contacts Fe(II)-heme a.

This sequence belongs to the heme-copper respiratory oxidase family. The cofactor is Cu(2+). Requires heme as cofactor.

Its subcellular location is the cell membrane. It catalyses the reaction 4 Fe(II)-[cytochrome c] + O2 + 8 H(+)(in) = 4 Fe(III)-[cytochrome c] + 2 H2O + 4 H(+)(out). Its pathway is energy metabolism; oxidative phosphorylation. Cytochrome c oxidase is the component of the respiratory chain that catalyzes the reduction of oxygen to water. Subunits 1-3 form the functional core of the enzyme complex. Co I is the catalytic subunit of the enzyme. Electrons originating in cytochrome c are transferred via the copper A center of subunit 2 and heme a of subunit 1 to the bimetallic center formed by heme a3 and copper B. This cytochrome c oxidase shows proton pump activity across the membrane in addition to the electron transfer. This is Cytochrome c oxidase subunit 1 (ctaD) from Bacillus sp. (strain PS3).